Here is a 391-residue protein sequence, read N- to C-terminus: Autotransporter heptosyltransferase Aah (391 aa).

Positions 101, 102, and 103 each coordinate ADP-D-glycero-beta-D-manno-heptose. D104 (proton acceptor) is an active-site residue. Q218, T220, K224, R251, L275, G296, and E320 together coordinate ADP-D-glycero-beta-D-manno-heptose. Fe(3+) contacts are provided by C333, C336, C352, and C364.

This sequence belongs to the glycosyltransferase 9 family. Homododecamer composed of 6 homodimers forming a ring. It depends on Fe(3+) as a cofactor.

Its subcellular location is the cytoplasm. The enzyme catalyses ADP-D-glycero-beta-D-manno-heptose + L-seryl-[protein] = O-(D-glycero-alpha-D-manno-heptosyl)-L-seryl-[protein] + ADP + H(+). It carries out the reaction ADP-L-glycero-beta-D-manno-heptose + L-seryl-[protein] = O-(L-glycero-alpha-D-manno-heptosyl)-L-seryl-[protein] + ADP + H(+). Glycosylates autotransporter AIDA-I. Catalyzes the addition of both L, D-heptose and D, D-heptose sugars. Probably by glycosylating AIDA-I, involved in bacteria adhesion to host mammalian cells. In Escherichia coli, this protein is Autotransporter heptosyltransferase Aah.